A 179-amino-acid polypeptide reads, in one-letter code: Large ribosomal subunit protein uL6 (179 aa).

Belongs to the universal ribosomal protein uL6 family. As to quaternary structure, part of the 50S ribosomal subunit.

Its function is as follows. This protein binds to the 23S rRNA, and is important in its secondary structure. It is located near the subunit interface in the base of the L7/L12 stalk, and near the tRNA binding site of the peptidyltransferase center. The protein is Large ribosomal subunit protein uL6 of Mycolicibacterium gilvum (strain PYR-GCK) (Mycobacterium gilvum (strain PYR-GCK)).